A 505-amino-acid chain; its full sequence is Surface lipoprotein assembly modifier 2 (505 aa).

Positions 1–19 (MLYFRYGFLVVWCAAGVSA) are cleaved as a signal peptide. The segment at 23–188 (ADAPAILDDK…RFRKKTEGLT (166 aa)) is N-terminal domain. Positions 189–505 (GWRFSGGISP…EVFVSADWRF (317 aa)) are C-terminal probable beta barrel. 14 beta stranded membrane passes run 190–200 (WRFSGGISPAV), 232–243 (LNYEIEAEKLTP), 248–258 (HYLLFRSNIGG), 273–283 (FGRAYLGWQYK), 287–297 (QTAGILPFYQV), 326–335 (VGVQLSHTYR), 340–350 (WQFSVALEHYR), 368–377 (GFYVSSAKRL), 381–391 (ATVFGGWQFVR), 411–420 (NGVYAGWAQE), 427–437 (LNSRVSASYAR), 456–465 (WNVSLALSHD), 472–482 (IVPALNYRFGR), and 495–505 (SEVFVSADWRF).

This sequence belongs to the Slam family.

Its subcellular location is the cell outer membrane. Its function is as follows. Required for correct export to the cell surface of cell outer membrane lipoprotein HpuA heterologously in E.coli (hpuA does not exist in N.meningitidis strain MC58). The chain is Surface lipoprotein assembly modifier 2 from Neisseria meningitidis serogroup B (strain ATCC BAA-335 / MC58).